Here is a 182-residue protein sequence, read N- to C-terminus: Small ribosomal subunit protein uS4c (182 aa).

The interval 13-32 is disordered; that stretch reads GLTSKRPRSGSDLKNPLRSG. Residues 82 to 143 form the S4 RNA-binding domain; that stretch reads MRLDNILFRL…KQRSKALIQN (62 aa).

Belongs to the universal ribosomal protein uS4 family. In terms of assembly, part of the 30S ribosomal subunit. Contacts protein S5. The interaction surface between S4 and S5 is involved in control of translational fidelity.

Its subcellular location is the plastid. The protein localises to the chloroplast. Functionally, one of the primary rRNA binding proteins, it binds directly to 16S rRNA where it nucleates assembly of the body of the 30S subunit. Its function is as follows. With S5 and S12 plays an important role in translational accuracy. In Scadoxus puniceus (Paintbrush lily), this protein is Small ribosomal subunit protein uS4c (rps4).